We begin with the raw amino-acid sequence, 92 residues long: UPF0250 protein XCC3453 (92 aa).

Belongs to the UPF0250 family.

This is UPF0250 protein XCC3453 from Xanthomonas campestris pv. campestris (strain ATCC 33913 / DSM 3586 / NCPPB 528 / LMG 568 / P 25).